Here is a 506-residue protein sequence, read N- to C-terminus: GMP synthase [glutamine-hydrolyzing] (506 aa).

In terms of domain architecture, Glutamine amidotransferase type-1 spans 4 to 192 (KLIILDFGSQ…FLDICGMKRD (189 aa)). The active-site Nucleophile is the C79. Residues H167 and E169 contribute to the active site. In terms of domain architecture, GMPS ATP-PPase spans 193-381 (WTPASFIEAT…LGMMPHLIHR (189 aa)). 220–226 (SGGVDSS) contributes to the ATP binding site.

As to quaternary structure, homodimer.

It catalyses the reaction XMP + L-glutamine + ATP + H2O = GMP + L-glutamate + AMP + diphosphate + 2 H(+). Its pathway is purine metabolism; GMP biosynthesis; GMP from XMP (L-Gln route): step 1/1. Catalyzes the synthesis of GMP from XMP. The protein is GMP synthase [glutamine-hydrolyzing] of Porphyromonas gingivalis (strain ATCC BAA-308 / W83).